Consider the following 364-residue polypeptide: tRNA 2-selenouridine synthase (364 aa).

Residues 14–137 (LIADTPIIDV…LRQTTIQATI (124 aa)) enclose the Rhodanese domain. The active-site S-selanylcysteine intermediate is the C97.

It belongs to the SelU family. Monomer.

The enzyme catalyses 5-methylaminomethyl-2-thiouridine(34) in tRNA + selenophosphate + (2E)-geranyl diphosphate + H2O + H(+) = 5-methylaminomethyl-2-selenouridine(34) in tRNA + (2E)-thiogeraniol + phosphate + diphosphate. It catalyses the reaction 5-methylaminomethyl-2-thiouridine(34) in tRNA + (2E)-geranyl diphosphate = 5-methylaminomethyl-S-(2E)-geranyl-thiouridine(34) in tRNA + diphosphate. It carries out the reaction 5-methylaminomethyl-S-(2E)-geranyl-thiouridine(34) in tRNA + selenophosphate + H(+) = 5-methylaminomethyl-2-(Se-phospho)selenouridine(34) in tRNA + (2E)-thiogeraniol. The catalysed reaction is 5-methylaminomethyl-2-(Se-phospho)selenouridine(34) in tRNA + H2O = 5-methylaminomethyl-2-selenouridine(34) in tRNA + phosphate. Involved in the post-transcriptional modification of the uridine at the wobble position (U34) of tRNA(Lys), tRNA(Glu) and tRNA(Gln). Catalyzes the conversion of 2-thiouridine (S2U-RNA) to 2-selenouridine (Se2U-RNA). Acts in a two-step process involving geranylation of 2-thiouridine (S2U) to S-geranyl-2-thiouridine (geS2U) and subsequent selenation of the latter derivative to 2-selenouridine (Se2U) in the tRNA chain. The sequence is that of tRNA 2-selenouridine synthase from Escherichia coli (strain 55989 / EAEC).